A 331-amino-acid chain; its full sequence is Tryptophan--tRNA ligase (331 aa).

Residues 10–12 and 18–19 contribute to the ATP site; these read QPS and GN. Positions 11 to 19 match the 'HIGH' region motif; it reads PSGQLTLGN. Asp133 provides a ligand contact to L-tryptophan. ATP contacts are provided by residues 145–147, Val184, and 193–197; these read GED and KMSKS. A 'KMSKS' region motif is present at residues 193–197; it reads KMSKS.

Belongs to the class-I aminoacyl-tRNA synthetase family. In terms of assembly, homodimer.

The protein resides in the cytoplasm. It catalyses the reaction tRNA(Trp) + L-tryptophan + ATP = L-tryptophyl-tRNA(Trp) + AMP + diphosphate + H(+). Its function is as follows. Catalyzes the attachment of tryptophan to tRNA(Trp). The sequence is that of Tryptophan--tRNA ligase from Listeria innocua serovar 6a (strain ATCC BAA-680 / CLIP 11262).